Consider the following 178-residue polypeptide: Caveolin-1 (178 aa).

S2 carries the post-translational modification N-acetylserine. A Phosphoserine modification is found at S2. A required for homooligomerization region spans residues 2–94 (SGGKYVDSEG…WKASFTTFTV (93 aa)). At 2-104 (SGGKYVDSEG…TKYWFYRLLS (103 aa)) the chain is on the cytoplasmic side. K5 is subject to N6-acetyllysine; alternate. A Glycyl lysine isopeptide (Lys-Gly) (interchain with G-Cter in ubiquitin); alternate cross-link involves residue K5. Y6 is modified (phosphotyrosine). The residue at position 9 (S9) is a Phosphoserine. Position 14 is a phosphotyrosine; by ABL1 (Y14). Y25 carries the post-translational modification Phosphotyrosine. Glycyl lysine isopeptide (Lys-Gly) (interchain with G-Cter in ubiquitin) cross-links involve residues K26 and K30. Residue S37 is modified to Phosphoserine. Glycyl lysine isopeptide (Lys-Gly) (interchain with G-Cter in ubiquitin) cross-links involve residues K39, K47, and K57. The segment at 82 to 94 (DGIWKASFTTFTV) is interaction with CAVIN3. Positions 105 to 125 (ALFGIPMALIWGIYFAILSFL) form an intramembrane region, helical. Residues 126–178 (HIWAVVPCIKSFLIEIQCISRVYSIYIHTVCDPLFEAIGKIFSNVRIGLQKEI) lie on the Cytoplasmic side of the membrane. The interval 131-142 (VPCIKSFLIEIQ) is interacts with SPRY1, SPRY2, SPRY3 and SPRY4. S-palmitoyl cysteine attachment occurs at residues C133, C143, and C156. Positions 149 to 160 (SIYIHTVCDPLF) are interacts with SPRY1, SPRY2, and SPRY4. Residues 167 to 178 (FSNVRIGLQKEI) form an interacts with SPRY1, SPRY2, SPRY3 and SPRY4 region.

Belongs to the caveolin family. In terms of assembly, homooligomer. Interacts with GLIPR2. Interacts with NOSTRIN. Interacts with SNAP25 and STX1A. Interacts (via the N-terminus) with DPP4; the interaction is direct. Interacts with CTNNB1, CDH1 and JUP. Interacts with PACSIN2; this interaction induces membrane tubulation. Interacts with SLC7A9. Interacts with BMX and BTK. Interacts with TGFBR1. Interacts with CAVIN3 (via leucine-zipper domain) in a cholesterol-sensitive manner. Interacts with CAVIN1. Interacts with EHD2 in a cholesterol-dependent manner. Forms a ternary complex with UBXN6 and VCP; mediates CAV1 targeting to lysosomes for degradation. Interacts with ABCG1; this interaction regulates ABCG1-mediated cholesterol efflux. Interacts with NEU3; this interaction enhances NEU3 sialidase activity within caveola. Interacts (via C-terminus) with SPRY1, SPRY2 (via C-terminus), SPRY3, and SPRY4. Interacts with IGFBP5; this interaction allows trafficking of IGFBP5 from the plasma membrane to the nucleus. Phosphorylated at Tyr-14 by ABL1 in response to oxidative stress. Post-translationally, ubiquitinated. Undergo monoubiquitination and multi- and/or polyubiquitination. Monoubiquitination of N-terminal lysines promotes integration in a ternary complex with UBXN6 and VCP which promotes oligomeric CAV1 targeting to lysosomes for degradation. Ubiquitinated by ZNRF1; leading to degradation and modulation of the TLR4-mediated immune response.

It localises to the golgi apparatus membrane. The protein resides in the cell membrane. The protein localises to the membrane. It is found in the caveola. Its subcellular location is the membrane raft. In terms of biological role, may act as a scaffolding protein within caveolar membranes. Forms a stable heterooligomeric complex with CAV2 that targets to lipid rafts and drives caveolae formation. Mediates the recruitment of CAVIN proteins (CAVIN1/2/3/4) to the caveolae. Interacts directly with G-protein alpha subunits and can functionally regulate their activity. Involved in the costimulatory signal essential for T-cell receptor (TCR)-mediated T-cell activation. Its binding to DPP4 induces T-cell proliferation and NF-kappa-B activation in a T-cell receptor/CD3-dependent manner. Recruits CTNNB1 to caveolar membranes and may regulate CTNNB1-mediated signaling through the Wnt pathway. Negatively regulates TGFB1-mediated activation of SMAD2/3 by mediating the internalization of TGFBR1 from membrane rafts leading to its subsequent degradation. Binds 20(S)-hydroxycholesterol (20(S)-OHC). The protein is Caveolin-1 (CAV1) of Saimiri boliviensis boliviensis (Bolivian squirrel monkey).